Here is a 665-residue protein sequence, read N- to C-terminus: Protein-arginine deiminase type-2 (665 aa).

Ca(2+) is bound by residues D123, D125, D127, V129, E131, N154, D156, E158, D166, D169, K171, D177, D180, E354, D389, F408, L411, and E412. The Nucleophile role is filled by C647.

Belongs to the protein arginine deiminase family. As to quaternary structure, homodimer. Requires Ca(2+) as cofactor. As to expression, detected in keratinocytes in epidermis (at protein level).

The protein localises to the cytoplasm. It carries out the reaction L-arginyl-[protein] + H2O = L-citrullyl-[protein] + NH4(+). In terms of biological role, catalyzes the deimination of arginine residues of proteins. The sequence is that of Protein-arginine deiminase type-2 (PADI2) from Homo sapiens (Human).